The primary structure comprises 260 residues: Carbonic anhydrase 2 (260 aa).

Ser2 carries the post-translational modification N-acetylserine. Ser2 carries the phosphoserine modification. Positions 3–259 constitute an Alpha-carbonic anhydrase domain; it reads HHWGYSKHNG…LKNRKIKASF (257 aa). The Proton acceptor role is filled by His64. Asn67 is a catalytic residue. Ser87 carries the phosphoserine modification. Residues His94, His96, and His119 each coordinate Zn(2+). Residue Tyr127 is part of the active site. A Phosphoserine modification is found at Ser165. 198–199 serves as a coordination point for substrate; that stretch reads TT.

This sequence belongs to the alpha-carbonic anhydrase family. Interacts with SLC4A4. Interaction with SLC4A7 regulates SLC4A7 transporter activity. Interacts with SLC26A6. Zn(2+) is required as a cofactor.

Its subcellular location is the cytoplasm. It is found in the cell membrane. It catalyses the reaction hydrogencarbonate + H(+) = CO2 + H2O. It carries out the reaction urea = cyanamide + H2O. Inhibited by acetazolamide. Its function is as follows. Catalyzes the reversible hydration of carbon dioxide. Can also hydrate cyanamide to urea. Involved in the regulation of fluid secretion into the anterior chamber of the eye. Essential for bone resorption and osteoclast differentiation. Contributes to intracellular pH regulation in the duodenal upper villous epithelium during proton-coupled peptide absorption. Stimulates the chloride-bicarbonate exchange activity of SLC26A6. The sequence is that of Carbonic anhydrase 2 (Ca2) from Mus musculus (Mouse).